A 399-amino-acid chain; its full sequence is MSNKLVLVLNCGSSSLKFAVIDAQTGDDQISGLAECFGLEDSRIKWKINGEKHESSLGAFTAHREAVEFIVNKILAGQPELAAQIQAVGHRIVHGGEKFTRSVIIDEHVIKGIEECSSLAPLHNPAHLIGIRAAIASFPKLPQVAVFDTAFHQSMPERAYIYALPYKLYREHGIRRYGMHGTSHLFVSREAAKVLNKPLEETNVICAHLGNGASVTAVKGGKSVDTSMGLTPLEGLVMGTRCGDLDPSIIYHLVHQLGYTLEEVNNLMNKQSGLLGISELTNDCRGIEEGYADGHKGATLALEIFCYRLAKYIASYTVPLGRLDAVVFTGGIGENSDIIREKVLNMLQIFNFHVDSERNKAARFGKKGIITTDNSTVAMVIPTNEEWVIAEDSIKLITK.

N10 provides a ligand contact to Mg(2+). K17 contributes to the ATP binding site. Substrate is bound at residue R91. D148 (proton donor/acceptor) is an active-site residue. Residues 208 to 212 (HLGNG), 283 to 285 (DCR), and 331 to 335 (GIGEN) contribute to the ATP site. E385 serves as a coordination point for Mg(2+).

This sequence belongs to the acetokinase family. Homodimer. Mg(2+) is required as a cofactor. It depends on Mn(2+) as a cofactor.

It localises to the cytoplasm. The enzyme catalyses acetate + ATP = acetyl phosphate + ADP. It participates in metabolic intermediate biosynthesis; acetyl-CoA biosynthesis; acetyl-CoA from acetate: step 1/2. Catalyzes the formation of acetyl phosphate from acetate and ATP. Can also catalyze the reverse reaction. This Shewanella sp. (strain ANA-3) protein is Acetate kinase.